The following is an 87-amino-acid chain: MKPIVYMLLFCAFTVVILGHPNNHGALIPHHDKLPNGESCTRPGYSCSESNQCCTPVDGETFTYGCGRAWMEGSKICYICNRESSMC.

An N-terminal signal peptide occupies residues 1–19; sequence MKPIVYMLLFCAFTVVILG. Intrachain disulfides connect C40/C54, C40/C77, C53/C66, and C80/C87.

This sequence belongs to the neurotoxin 27 (Jztx-72) family. ICK-41 subfamily. In terms of tissue distribution, expressed by the venom gland.

Its subcellular location is the secreted. Functionally, probable neurotoxin with ion channel impairing activity. The protein is Toxin ICK-42 of Trittame loki (Brush-footed trapdoor spider).